The primary structure comprises 212 residues: Uracil phosphoribosyltransferase (212 aa).

5-phospho-alpha-D-ribose 1-diphosphate is bound by residues R78, R103, and 130-138; that span reads DPMLATGGS. Uracil-binding positions include I193 and 198–200; that span reads GDA. D199 lines the 5-phospho-alpha-D-ribose 1-diphosphate pocket.

The protein belongs to the UPRTase family. Requires Mg(2+) as cofactor.

It carries out the reaction UMP + diphosphate = 5-phospho-alpha-D-ribose 1-diphosphate + uracil. The protein operates within pyrimidine metabolism; UMP biosynthesis via salvage pathway; UMP from uracil: step 1/1. Allosterically activated by GTP. Catalyzes the conversion of uracil and 5-phospho-alpha-D-ribose 1-diphosphate (PRPP) to UMP and diphosphate. The polypeptide is Uracil phosphoribosyltransferase (Stutzerimonas stutzeri (strain A1501) (Pseudomonas stutzeri)).